The primary structure comprises 299 residues: tRNA dimethylallyltransferase (299 aa).

Residue 13–20 (GPTASGKT) participates in ATP binding. A substrate-binding site is contributed by 15–20 (TASGKT). Residues 38–41 (DSRQ) form an interaction with substrate tRNA region.

This sequence belongs to the IPP transferase family. As to quaternary structure, monomer. Mg(2+) is required as a cofactor.

It carries out the reaction adenosine(37) in tRNA + dimethylallyl diphosphate = N(6)-dimethylallyladenosine(37) in tRNA + diphosphate. Its function is as follows. Catalyzes the transfer of a dimethylallyl group onto the adenine at position 37 in tRNAs that read codons beginning with uridine, leading to the formation of N6-(dimethylallyl)adenosine (i(6)A). The chain is tRNA dimethylallyltransferase from Prochlorococcus marinus (strain MIT 9313).